We begin with the raw amino-acid sequence, 296 residues long: 4-hydroxy-tetrahydrodipicolinate synthase (296 aa).

T49 is a pyruvate binding site. Y137 acts as the Proton donor/acceptor in catalysis. K165 serves as the catalytic Schiff-base intermediate with substrate. I207 contacts pyruvate.

Belongs to the DapA family. As to quaternary structure, homotetramer; dimer of dimers.

It localises to the cytoplasm. The enzyme catalyses L-aspartate 4-semialdehyde + pyruvate = (2S,4S)-4-hydroxy-2,3,4,5-tetrahydrodipicolinate + H2O + H(+). It participates in amino-acid biosynthesis; L-lysine biosynthesis via DAP pathway; (S)-tetrahydrodipicolinate from L-aspartate: step 3/4. Functionally, catalyzes the condensation of (S)-aspartate-beta-semialdehyde [(S)-ASA] and pyruvate to 4-hydroxy-tetrahydrodipicolinate (HTPA). The chain is 4-hydroxy-tetrahydrodipicolinate synthase from Afipia carboxidovorans (strain ATCC 49405 / DSM 1227 / KCTC 32145 / OM5) (Oligotropha carboxidovorans).